Here is a 371-residue protein sequence, read N- to C-terminus: MNIKGKHYRTVWVSGDGKAVEIIDQTKLPFKFEVVALTSAEMAATAIQDMWVRGAPLIGVVAAYGIALGMNHDASDMGLQRYYDLLIKTRPTAINLKWALDRMIDTLKDLCVSERKDVAWALAAEIAEEDVALCEQIGLHGAEVIREIAQKKPAGSVVNILTHCNAGWLATVDWGTALSPIYKAHENGIPVHVWVDETRPRNQGGLTAFELGSHGIPHTLIADNAGGHLMQHGDVDLCIVGTDRTTARGDVCNKIGTYLKALAAHDNHVPFYVALPSPTIDWTIEDGKSIPIEQRDGKEQSHVYGINPQGELSWVNTAPEGTRCGNYAFDVTPARYITGFITERGVCAASKSALADMFADLKSKALQGEQH.

Substrate-binding positions include 53 to 55 (RGA), Arg-90, and Gln-203. Asp-243 (proton donor) is an active-site residue. 253–254 (NK) contributes to the substrate binding site.

This sequence belongs to the eIF-2B alpha/beta/delta subunits family. MtnA subfamily.

The enzyme catalyses 5-(methylsulfanyl)-alpha-D-ribose 1-phosphate = 5-(methylsulfanyl)-D-ribulose 1-phosphate. It catalyses the reaction 5-deoxy-alpha-D-ribose 1-phosphate = 5-deoxy-D-ribulose 1-phosphate. It functions in the pathway amino-acid biosynthesis; L-methionine biosynthesis via salvage pathway; L-methionine from S-methyl-5-thio-alpha-D-ribose 1-phosphate: step 1/6. Its function is as follows. Catalyzes the interconversion of methylthioribose-1-phosphate (MTR-1-P) into methylthioribulose-1-phosphate (MTRu-1-P). Also catalyzes the interconversion of 5-deoxyribose 1-phosphate and 5-deoxyribulose 1-phosphate. Part of a bifunctional DHAP-shunt salvage pathway for SAM by-products. This Escherichia coli O45:K1 (strain S88 / ExPEC) protein is Methylthioribose-1-phosphate isomerase.